Consider the following 397-residue polypeptide: MAKAKFERTKPHVNIGTIGHIDHGKTTLTAAITKVLHDAYPDLNEASAFDQIDKAPEERQRGITISIAHVEYQTETRHYAHVDCPGHADYIKNMITGAAQMDGAILVVAATDGPMPQTKEHVLLARQVGVPYIVVALNKADMVDDEEILELVELEVRELLSEYEFPGDDLPVVKVSALKALEGDKEWGQSVLDLMKAVDENIPQPERDVDKPFLMPIEDVFTITGRGTVVTGRIERGVLKVNETVDIVGIKTEKTTTTVTGIEMFRKLLDEGQAGENVGLLLRGIKREDVERGQVIIKPGSVTPHTEFEAQAYILSKDEGGRHTPFFNNYRPQFYFRTTDVTGVVTLPEGTEMVMPGDNTEMTVELIQPVAMEEGLKFAIREGGRTVGAGQVTKINK.

Positions 10-206 (KPHVNIGTIG…AVDENIPQPE (197 aa)) constitute a tr-type G domain. The segment at 19-26 (GHIDHGKT) is G1. Residue 19–26 (GHIDHGKT) participates in GTP binding. Position 26 (Thr-26) interacts with Mg(2+). The tract at residues 62 to 66 (GITIS) is G2. Positions 83 to 86 (DCPG) are G3. GTP contacts are provided by residues 83–87 (DCPGH) and 138–141 (NKAD). Residues 138–141 (NKAD) are G4. The interval 176–178 (SAL) is G5.

Belongs to the TRAFAC class translation factor GTPase superfamily. Classic translation factor GTPase family. EF-Tu/EF-1A subfamily. In terms of assembly, monomer.

Its subcellular location is the cytoplasm. It catalyses the reaction GTP + H2O = GDP + phosphate + H(+). Its function is as follows. GTP hydrolase that promotes the GTP-dependent binding of aminoacyl-tRNA to the A-site of ribosomes during protein biosynthesis. In Streptomyces avermitilis (strain ATCC 31267 / DSM 46492 / JCM 5070 / NBRC 14893 / NCIMB 12804 / NRRL 8165 / MA-4680), this protein is Elongation factor Tu 1.